We begin with the raw amino-acid sequence, 290 residues long: Ribonuclease HIII (290 aa).

The region spanning 78 to 290 (LPLIGTDEVG…FKNTEKAKNA (213 aa)) is the RNase H type-2 domain. A divalent metal cation contacts are provided by aspartate 84, glutamate 85, and aspartate 187.

This sequence belongs to the RNase HII family. RnhC subfamily. Mn(2+) serves as cofactor. Mg(2+) is required as a cofactor.

The protein resides in the cytoplasm. The catalysed reaction is Endonucleolytic cleavage to 5'-phosphomonoester.. Endonuclease that specifically degrades the RNA of RNA-DNA hybrids. The protein is Ribonuclease HIII of Streptococcus pneumoniae (strain P1031).